Here is a 710-residue protein sequence, read N- to C-terminus: Early transcription factor 82 kDa subunit (710 aa).

This sequence belongs to the poxviridae VETF large subunit family. Heterodimer of a 70 kDa and a 82 kDa subunit. Part of the early transcription complex composed of ETF, RAP94/OPG109, and the DNA-directed RNA polymerase.

The protein resides in the virion. In terms of biological role, acts with RNA polymerase to initiate transcription from early gene promoters. Is recruited by the RPO-associated protein of 94 kDa RAP94/OPG109 to form the early transcription complex, which also contains the core RNA polymerase. ETF heterodimer binds to early gene promoters. In Variola virus (isolate Human/India/Ind3/1967) (VARV), this protein is Early transcription factor 82 kDa subunit (OPG133).